The sequence spans 87 residues: Large ribosomal subunit protein bL31B (87 aa).

The protein belongs to the bacterial ribosomal protein bL31 family. Type B subfamily. In terms of assembly, part of the 50S ribosomal subunit.

The polypeptide is Large ribosomal subunit protein bL31B (Salinispora arenicola (strain CNS-205)).